Here is a 556-residue protein sequence, read N- to C-terminus: Beta-caryophyllene synthase TPS9FN (556 aa).

Residues arginine 273, aspartate 310, aspartate 314, arginine 451, and aspartate 454 each coordinate (2E,6E)-farnesyl diphosphate. Mg(2+) is bound by residues aspartate 310 and aspartate 314. A DDXXD motif motif is present at residues 310–314 (DDIYD). Mg(2+) contacts are provided by aspartate 454, serine 458, and glutamate 462.

Belongs to the terpene synthase family. Tpsb subfamily. Requires Mg(2+) as cofactor. It depends on Mn(2+) as a cofactor. Expressed in glandular trichomes two to four weeks after flowering onset.

It carries out the reaction (2E,6E)-farnesyl diphosphate = (-)-(E)-beta-caryophyllene + diphosphate. The catalysed reaction is (2E,6E)-farnesyl diphosphate = alpha-humulene + diphosphate. The protein operates within secondary metabolite biosynthesis; terpenoid biosynthesis. Involved in sesquiterpene olefins biosynthesis, constituants of cannabinoids and terpenoids-rich resins. Catalyzes mainly the conversion of (2E)-farnesyl diphosphate to beta-caryophyllene and alpha-humulene. Can also use (2E)-geranyl diphosphate as substrate with low efficiency. This chain is Beta-caryophyllene synthase TPS9FN, found in Cannabis sativa (Hemp).